We begin with the raw amino-acid sequence, 345 residues long: uncharacterized protein (345 aa).

Disordered regions lie at residues 1–24 (MGLE…ENRK) and 296–345 (MTAH…LNES). Over residues 304–323 (SDYDNDDDTDGIINETDYEL) the composition is skewed to acidic residues. Residues 324–345 (DTSQSEFATLTTSSNKSILNES) show a composition bias toward polar residues.

This is an uncharacterized protein from Schizosaccharomyces pombe (strain 972 / ATCC 24843) (Fission yeast).